The primary structure comprises 547 residues: Sodium-coupled neutral amino acid transporter 4 (547 aa).

A disordered region spans residues 1–30 (MDPMELRNVNIEPDDESSSGESAPDSYIGI). Residues 1–104 (MDPMELRNVN…GLSYAMANTG (104 aa)) lie on the Extracellular side of the membrane. Phosphoserine is present on S49. The helical transmembrane segment at 105-125 (IILFIIMLLAVAILSLYSVHL) threads the bilayer. At 126-151 (LLKTAKEGGSLIYEKLGEKAFGWPGK) the chain is on the cytoplasmic side. Residues 152-172 (IGAFVSITMQNIGAMSSYLFI) traverse the membrane as a helical segment. Over 173–195 (IKYELPEVIRAFMGLEENTGEWY) the chain is Extracellular. Residues 196-216 (LNGNYLIIFVSVGIILPLSLL) form a helical membrane-spanning segment. Over 217–220 (KNLG) the chain is Cytoplasmic. The helical transmembrane segment at 221–241 (YLGYTSGFSLTCMVFFVSVVI) threads the bilayer. The Extracellular segment spans residues 242–332 (YKKFQIPCPL…PKYFVFNSRT (91 aa)). C249 and C321 form a disulfide bridge. N-linked (GlcNAc...) asparagine glycans are attached at residues N260, N264, and N276. The helical transmembrane segment at 333–353 (AYAIPILVFAFVCHPEVLPIY) threads the bilayer. Residues 354–369 (SELKDRSRRKMQTVSN) are Cytoplasmic-facing. A helical membrane pass occupies residues 370 to 390 (ISITGMLVMYLLAALFGYLTF). Residues 391–411 (YGEVEDELLHAYSKVYTLDIP) are Extracellular-facing. The helical transmembrane segment at 412-432 (LLMVRLAVLVAVTLTVPIVLF) threads the bilayer. At 433 to 453 (PIRTSVITLLFPKRPFSWIRH) the chain is on the cytoplasmic side. The helical transmembrane segment at 454–474 (FLIAAVLIALNNVLVILVPTI) threads the bilayer. The Extracellular segment spans residues 475 to 476 (KY). The chain crosses the membrane as a helical span at residues 477-497 (IFGFIGASSATMLIFILPAVF). Over 498–514 (YLKLVKKETFRSPQKVG) the chain is Cytoplasmic. Residues 515 to 535 (ALIFLVVGIFFMIGSMALIII) form a helical membrane-spanning segment. At 536 to 547 (DWIYDPPNSKHH) the chain is on the extracellular side.

It belongs to the amino acid/polyamine transporter 2 family. Post-translationally, the disulfide bond plays an important role in substrate transport, but has no effect on trafficking to the cell surface. Expressed almost exclusively in embryonic and adult liver, and at lower levels in the kidney. Expressed at lower levels in adult muscle and pancreas. Detected in fetal blood vessels. Expressed in syncytiotrophoblas of placenta during first trimester and at term. Highly expressed in first trimester placenta compared to term placenta.

Its subcellular location is the cell membrane. It is found in the cell projection. The protein resides in the microvillus membrane. The catalysed reaction is L-methionine(in) + Na(+)(in) = L-methionine(out) + Na(+)(out). The enzyme catalyses L-asparagine(in) + Na(+)(in) = L-asparagine(out) + Na(+)(out). It carries out the reaction L-threonine(in) + Na(+)(in) = L-threonine(out) + Na(+)(out). It catalyses the reaction L-serine(in) + Na(+)(in) = L-serine(out) + Na(+)(out). The catalysed reaction is glycine(in) + Na(+)(in) = glycine(out) + Na(+)(out). The enzyme catalyses L-alanine(in) + Na(+)(in) = L-alanine(out) + Na(+)(out). It carries out the reaction L-glutamine(in) + Na(+)(in) = L-glutamine(out) + Na(+)(out). It catalyses the reaction L-histidine(in) + Na(+)(in) = L-histidine(out) + Na(+)(out). The catalysed reaction is L-cysteine(in) + Na(+)(in) = L-cysteine(out) + Na(+)(out). The enzyme catalyses L-proline(in) + Na(+)(in) = L-proline(out) + Na(+)(out). Functionally, symporter that cotransports neutral amino acids and sodium ions from the extraccellular to the intracellular side of the cell membrane. The transport is electrogenic, pH dependent and partially tolerates substitution of Na(+) by Li(+). Preferentially transports smaller amino acids, such as glycine, L-alanine, L-serine, L-asparagine and L-threonine, followed by L-cysteine, L-histidine, L-proline and L-glutamine and L-methionine. The polypeptide is Sodium-coupled neutral amino acid transporter 4 (Homo sapiens (Human)).